The chain runs to 377 residues: Sterol 24-C-methyltransferase erg6 (377 aa).

Belongs to the class I-like SAM-binding methyltransferase superfamily. Erg6/SMT family.

It localises to the microsome. The protein localises to the mitochondrion. It catalyses the reaction lanosterol + S-adenosyl-L-methionine = eburicol + S-adenosyl-L-homocysteine + H(+). It functions in the pathway steroid metabolism; ergosterol biosynthesis. With respect to regulation, specific and total activity is decreased in presence of alpha-bisabolol. In terms of biological role, sterol 24-C-methyltransferase; part of the third module of ergosterol biosynthesis pathway that includes the late steps of the pathway. Methylates lanosterol at C-24 to produce eburicol. The third module or late pathway involves the ergosterol synthesis itself through consecutive reactions that mainly occur in the endoplasmic reticulum (ER) membrane. Firstly, the squalene synthase erg9 catalyzes the condensation of 2 farnesyl pyrophosphate moieties to form squalene, which is the precursor of all steroids. Squalene synthase is crucial for balancing the incorporation of farnesyl diphosphate (FPP) into sterol and nonsterol isoprene synthesis. Secondly, squalene is converted into lanosterol by the consecutive action of the squalene epoxidase erg1 and the lanosterol synthase erg7. Then, the delta(24)-sterol C-methyltransferase erg6 methylates lanosterol at C-24 to produce eburicol. Eburicol is the substrate of the sterol 14-alpha demethylase encoded by cyp51A and cyp51B, to yield 4,4,24-trimethyl ergosta-8,14,24(28)-trienol. The C-14 reductase erg24 then reduces the C14=C15 double bond which leads to 4,4-dimethylfecosterol. A sequence of further demethylations at C-4, involving the C-4 demethylation complex containing the C-4 methylsterol oxidases erg25A or erg25B, the sterol-4-alpha-carboxylate 3-dehydrogenase erg26 and the 3-keto-steroid reductase erg27, leads to the production of fecosterol via 4-methylfecosterol. The C-8 sterol isomerase erg2 then catalyzes the reaction which results in unsaturation at C-7 in the B ring of sterols and thus converts fecosterol to episterol. The sterol-C5-desaturase erg3B then catalyzes the introduction of a C-5 double bond in the B ring to produce 5-dehydroepisterol. The 2 other sterol-C5-desaturases, erg3A and erg3C, seem to be less important in ergosterol biosynthesis. The C-22 sterol desaturase erg5 further converts 5-dehydroepisterol into ergosta-5,7,22,24(28)-tetraen-3beta-ol by forming the C-22(23) double bond in the sterol side chain. Finally, ergosta-5,7,22,24(28)-tetraen-3beta-ol is substrate of the C-24(28) sterol reductases erg4A and erg4B to produce ergosterol. Possible alternative sterol biosynthetic pathways might exist from fecosterol to ergosterol, depending on the activities of the erg3 isoforms. The protein is Sterol 24-C-methyltransferase erg6 of Aspergillus fumigatus (strain ATCC MYA-4609 / CBS 101355 / FGSC A1100 / Af293) (Neosartorya fumigata).